Here is a 153-residue protein sequence, read N- to C-terminus: Endoribonuclease YbeY (153 aa).

Zn(2+) contacts are provided by His118, His122, and His128.

The protein belongs to the endoribonuclease YbeY family. Zn(2+) is required as a cofactor.

Its subcellular location is the cytoplasm. Its function is as follows. Single strand-specific metallo-endoribonuclease involved in late-stage 70S ribosome quality control and in maturation of the 3' terminus of the 16S rRNA. This Chloroflexus aggregans (strain MD-66 / DSM 9485) protein is Endoribonuclease YbeY.